A 351-amino-acid polypeptide reads, in one-letter code: UDP-N-acetylglucosamine--N-acetylmuramyl-(pentapeptide) pyrophosphoryl-undecaprenol N-acetylglucosamine transferase (351 aa).

Residues 13–15, Asn-125, Arg-161, Ser-189, Ile-241, 260–265, and Gln-285 contribute to the UDP-N-acetyl-alpha-D-glucosamine site; these read TGG and ALTVCE.

It belongs to the glycosyltransferase 28 family. MurG subfamily.

It localises to the cell inner membrane. It catalyses the reaction di-trans,octa-cis-undecaprenyl diphospho-N-acetyl-alpha-D-muramoyl-L-alanyl-D-glutamyl-meso-2,6-diaminopimeloyl-D-alanyl-D-alanine + UDP-N-acetyl-alpha-D-glucosamine = di-trans,octa-cis-undecaprenyl diphospho-[N-acetyl-alpha-D-glucosaminyl-(1-&gt;4)]-N-acetyl-alpha-D-muramoyl-L-alanyl-D-glutamyl-meso-2,6-diaminopimeloyl-D-alanyl-D-alanine + UDP + H(+). The protein operates within cell wall biogenesis; peptidoglycan biosynthesis. In terms of biological role, cell wall formation. Catalyzes the transfer of a GlcNAc subunit on undecaprenyl-pyrophosphoryl-MurNAc-pentapeptide (lipid intermediate I) to form undecaprenyl-pyrophosphoryl-MurNAc-(pentapeptide)GlcNAc (lipid intermediate II). In Haemophilus influenzae (strain PittGG), this protein is UDP-N-acetylglucosamine--N-acetylmuramyl-(pentapeptide) pyrophosphoryl-undecaprenol N-acetylglucosamine transferase.